Consider the following 279-residue polypeptide: Tumor protein p63-regulated gene 1 protein (279 aa).

The disordered stretch occupies residues 1–49 (MSTIGSFDGFQPVSLKQEEEDQPSENDHLSTKEGNSGKDPGSRRISRQQ). A hSac2 domain is found at 72–259 (VTRPGAIETA…ILIETYTGLM (188 aa)).

It belongs to the TPRG1 family. Highly expressed in skin. Also detected at low levels in tongue and esophagus.

It localises to the cytoplasm. The sequence is that of Tumor protein p63-regulated gene 1 protein from Mus musculus (Mouse).